The sequence spans 439 residues: Microfibrillar-associated protein 1A (439 aa).

The tract at residues 1-200 (MSVPSALMKQ…SEDEMEPRLK (200 aa)) is disordered. Residue Ser2 is modified to N-acetylserine. Residues 23–34 (RNEKGEISMEKV) show a composition bias toward basic and acidic residues. Ser52 and Ser53 each carry phosphoserine. Over residues 61 to 70 (QFIKKAKEQE) the composition is skewed to basic and acidic residues. Lys67 is covalently cross-linked (Glycyl lysine isopeptide (Lys-Gly) (interchain with G-Cter in SUMO2)). Residues 71-81 (AEPEEQEEDSS) are compositionally biased toward acidic residues. 5 positions are modified to phosphoserine: Ser94, Ser116, Ser118, Ser132, and Ser133. 2 stretches are compositionally biased toward acidic residues: residues 112 to 122 (VVGESDSEVEG) and 131 to 144 (DSSE…DDEE). Basic and acidic residues predominate over residues 145–163 (IERRRGMMRQRAQERKNEE). Residues 178–195 (ESESESEYEEYTDSEDEM) show a composition bias toward acidic residues. A Glycyl lysine isopeptide (Lys-Gly) (interchain with G-Cter in SUMO2) cross-link involves residue Lys249. Thr267 bears the Phosphothreonine mark. Lys357 participates in a covalent cross-link: Glycyl lysine isopeptide (Lys-Gly) (interchain with G-Cter in SUMO2). Phosphoserine is present on Ser361. Glycyl lysine isopeptide (Lys-Gly) (interchain with G-Cter in SUMO2) cross-links involve residues Lys371, Lys381, Lys415, and Lys418. Residue Ser432 is modified to Phosphoserine.

The protein belongs to the MFAP1 family. As to quaternary structure, component of the spliceosome B complex. Interacts with PRPF38A (via N-terminal interaction domain).

Its subcellular location is the nucleus. Involved in pre-mRNA splicing as a component of the spliceosome. The chain is Microfibrillar-associated protein 1A from Mus musculus (Mouse).